Here is a 226-residue protein sequence, read N- to C-terminus: Phosphoenolpyruvate guanylyltransferase (226 aa).

The phosphoenolpyruvate site is built by T145, G161, and S164.

This sequence belongs to the CofC family.

The enzyme catalyses phosphoenolpyruvate + GTP + H(+) = enolpyruvoyl-2-diphospho-5'-guanosine + diphosphate. Its pathway is cofactor biosynthesis; coenzyme F420 biosynthesis. Functionally, guanylyltransferase that catalyzes the activation of phosphoenolpyruvate (PEP) as enolpyruvoyl-2-diphospho-5'-guanosine, via the condensation of PEP with GTP. It is involved in the biosynthesis of coenzyme F420, a hydride carrier cofactor. In Nocardia farcinica (strain IFM 10152), this protein is Phosphoenolpyruvate guanylyltransferase.